Here is a 142-residue protein sequence, read N- to C-terminus: Ribosome-binding factor A (142 aa).

A disordered region spans residues 119–142 (EAKQKQHGVETDAEQGDTKEEGDK).

Belongs to the RbfA family. In terms of assembly, monomer. Binds 30S ribosomal subunits, but not 50S ribosomal subunits or 70S ribosomes.

It localises to the cytoplasm. In terms of biological role, one of several proteins that assist in the late maturation steps of the functional core of the 30S ribosomal subunit. Associates with free 30S ribosomal subunits (but not with 30S subunits that are part of 70S ribosomes or polysomes). Required for efficient processing of 16S rRNA. May interact with the 5'-terminal helix region of 16S rRNA. This chain is Ribosome-binding factor A, found in Shewanella pealeana (strain ATCC 700345 / ANG-SQ1).